The following is a 103-amino-acid chain: UPF0473 protein SGO_2040 (103 aa).

This sequence belongs to the UPF0473 family.

In Streptococcus gordonii (strain Challis / ATCC 35105 / BCRC 15272 / CH1 / DL1 / V288), this protein is UPF0473 protein SGO_2040.